Reading from the N-terminus, the 132-residue chain is Small ribosomal subunit protein uS9 (132 aa).

Belongs to the universal ribosomal protein uS9 family.

This Mycoplasma genitalium (strain ATCC 33530 / DSM 19775 / NCTC 10195 / G37) (Mycoplasmoides genitalium) protein is Small ribosomal subunit protein uS9 (rpsI).